We begin with the raw amino-acid sequence, 573 residues long: Ascochitine biosynthesis cluster transcriptional regulator (573 aa).

The protein resides in the nucleus. Functionally, transcription factor that regulates the expression of the gene cluster that mediates the biosynthesis of the mycotoxin ascochitine, an o-quinone methide that plays a possible protective role against other microbial competitors in nature and is considered to be important for pathogenicity of legume-associated Didymella species. The protein is Ascochitine biosynthesis cluster transcriptional regulator of Didymella fabae (Leaf and pod spot disease fungus).